The primary structure comprises 897 residues: Probable basic-leucine zipper transcription factor R (897 aa).

Disordered stretches follow at residues 38–88 (DDNI…NIET) and 128–198 (YQQR…NSNS). The span at 44-75 (NNNNNNNNNNNNNNNNNNNNNNNNNNNNNNNN) shows a compositional bias: low complexity. Polar residues predominate over residues 76 to 88 (IGSPQIMNENIET). The stretch at 94 to 137 (QYLERLQSIQQQQHQCQTQIQQQLQNYQQQYEDQYQQRQQQYQD) forms a coiled coil. A compositionally biased stretch (low complexity) spans 128–140 (YQQRQQQYQDQYQ). Positions 141-157 (KPYSSPPLNFNSIPPIT) are enriched in polar residues. Residues 158–198 (NNNNNNNNNNNNNNNNNNSNSNSNSNSNSNSNSNSNSNSNS) are compositionally biased toward low complexity. Coiled-coil stretches lie at residues 228 to 258 (LQQQQQQQQQQQQQQQQQQQQQQQQQQQQQQ) and 330 to 407 (QQLQ…QQQQ). A disordered region spans residues 461–516 (LQLPTPFYSPQQQQQQHTPISSFIPPPSLPSSPPSPPSPPSPPPQQQQQQQQQQQQ). Pro residues predominate over residues 484–505 (IPPPSLPSSPPSPPSPPSPPPQ). Over residues 506 to 516 (QQQQQQQQQQQ) the composition is skewed to low complexity. In terms of domain architecture, bZIP spans 557–620 (ESKESIKKYN…SIEMMRMEPE (64 aa)). The tract at residues 559-564 (KESIKK) is basic motif. The interval 569–576 (IASRNYRL) is leucine-zipper.

The protein belongs to the bZIP family.

The protein localises to the nucleus. Its function is as follows. Probable transcriptional regulator. The chain is Probable basic-leucine zipper transcription factor R (bzpR) from Dictyostelium discoideum (Social amoeba).